The primary structure comprises 253 residues: uncharacterized protein (253 aa).

This is an uncharacterized protein from Escherichia coli O6:H1 (strain CFT073 / ATCC 700928 / UPEC).